The sequence spans 368 residues: Phospho-N-acetylmuramoyl-pentapeptide-transferase (368 aa).

10 helical membrane passes run 2–22 (IALI…TPLL), 51–71 (TLGG…SALY), 80–100 (PTWA…LGFI), 116–136 (VGGK…LALI), 166–186 (IVAI…WTNA), 193–213 (LDGL…IIAM), 234–254 (PLDL…FLWY), 256–276 (CNPA…GLFA), 277–297 (ALSI…LFVV), and 340–360 (FWIV…GNWV).

Belongs to the glycosyltransferase 4 family. MraY subfamily. Mg(2+) is required as a cofactor.

It localises to the cell membrane. It catalyses the reaction UDP-N-acetyl-alpha-D-muramoyl-L-alanyl-gamma-D-glutamyl-meso-2,6-diaminopimeloyl-D-alanyl-D-alanine + di-trans,octa-cis-undecaprenyl phosphate = di-trans,octa-cis-undecaprenyl diphospho-N-acetyl-alpha-D-muramoyl-L-alanyl-D-glutamyl-meso-2,6-diaminopimeloyl-D-alanyl-D-alanine + UMP. The protein operates within cell wall biogenesis; peptidoglycan biosynthesis. Catalyzes the initial step of the lipid cycle reactions in the biosynthesis of the cell wall peptidoglycan: transfers peptidoglycan precursor phospho-MurNAc-pentapeptide from UDP-MurNAc-pentapeptide onto the lipid carrier undecaprenyl phosphate, yielding undecaprenyl-pyrophosphoryl-MurNAc-pentapeptide, known as lipid I. In Bifidobacterium animalis subsp. lactis (strain AD011), this protein is Phospho-N-acetylmuramoyl-pentapeptide-transferase.